A 546-amino-acid chain; its full sequence is Thermosome subunit beta (546 aa).

Belongs to the TCP-1 chaperonin family. Forms a Heterooligomeric complex of two stacked eight-membered rings.

Its function is as follows. Molecular chaperone; binds unfolded polypeptides in vitro, and has a weak ATPase activity. In Thermococcus kodakarensis (strain ATCC BAA-918 / JCM 12380 / KOD1) (Pyrococcus kodakaraensis (strain KOD1)), this protein is Thermosome subunit beta (thsB).